We begin with the raw amino-acid sequence, 239 residues long: Serine protease SplC (239 aa).

Residues 1–36 form the signal peptide; sequence MNKNIVIKSMAALAILTSVTGINAAVVEETQQIANA. Catalysis depends on charge relay system residues His-75, Asp-113, and Ser-193.

This sequence belongs to the peptidase S1B family.

The protein resides in the secreted. The polypeptide is Serine protease SplC (splC) (Staphylococcus aureus).